The sequence spans 357 residues: Sorbitol dehydrogenase (357 aa).

The residue at position 2 (alanine 2) is an N-acetylalanine. Cysteine 45 lines the Zn(2+) pocket. Tyrosine 51 is a binding site for substrate. 2 residues coordinate Zn(2+): histidine 70 and glutamate 71. Glutamate 156 provides a ligand contact to substrate. 3 residues coordinate NAD(+): isoleucine 184, aspartate 204, and arginine 209. Phosphoserine occurs at positions 211 and 225. NAD(+) is bound by residues 273–275 (VGL) and 297–299 (VFR). Substrate contacts are provided by arginine 299 and tyrosine 300.

Belongs to the zinc-containing alcohol dehydrogenase family. As to quaternary structure, homotetramer. Zn(2+) serves as cofactor.

It localises to the mitochondrion membrane. Its subcellular location is the cell projection. The protein localises to the cilium. The protein resides in the flagellum. It catalyses the reaction xylitol + NAD(+) = D-xylulose + NADH + H(+). The catalysed reaction is L-iditol + NAD(+) = keto-L-sorbose + NADH + H(+). The enzyme catalyses keto-D-fructose + NADH + H(+) = D-sorbitol + NAD(+). Polyol dehydrogenase that catalyzes the reversible NAD(+)-dependent oxidation of various sugar alcohols. Is active with xylitol, L-iditol and D-sorbitol (D-glucitol) as substrates, leading to the C2-oxidized products D-xylulose, L-sorbose and D-fructose, respectively. Is a key enzyme in the polyol pathway that interconverts glucose and fructose via sorbitol, which constitutes an important alternate route for glucose metabolism. May play a role in sperm motility by using sorbitol as an alternative energy source for sperm motility. In Pongo abelii (Sumatran orangutan), this protein is Sorbitol dehydrogenase (SORD).